The following is a 698-amino-acid chain: Glycine--tRNA ligase beta subunit (698 aa).

The protein belongs to the class-II aminoacyl-tRNA synthetase family. Tetramer of two alpha and two beta subunits.

The protein resides in the cytoplasm. It carries out the reaction tRNA(Gly) + glycine + ATP = glycyl-tRNA(Gly) + AMP + diphosphate. In Xanthomonas campestris pv. campestris (strain B100), this protein is Glycine--tRNA ligase beta subunit.